Reading from the N-terminus, the 409-residue chain is uncharacterized protein (409 aa).

The first 39 residues, methionine 1–glycine 39, serve as a signal peptide directing secretion. Positions 67, 69, 181, 250, and 271 each coordinate Zn(2+).

The protein belongs to the metallo-dependent hydrolases superfamily. Peptidase M19 family. In terms of assembly, interacts with dil1. It depends on Zn(2+) as a cofactor.

The catalysed reaction is an L-aminoacyl-L-amino acid + H2O = 2 an L-alpha-amino acid. This is an uncharacterized protein from Schizosaccharomyces pombe (strain 972 / ATCC 24843) (Fission yeast).